The following is a 396-amino-acid chain: UPF0164 protein TP_0858 (396 aa).

Residues 1-28 (MGTMIRHTFTHRCGALLCALALGSSTMA) form the signal peptide.

The protein belongs to the UPF0164 family.

In Treponema pallidum (strain Nichols), this protein is UPF0164 protein TP_0858.